Consider the following 599-residue polypeptide: Aspartate--tRNA(Asp/Asn) ligase (599 aa).

Glu172 is an L-aspartate binding site. Positions 196 to 199 (QLFK) are aspartate. Arg218 is a binding site for L-aspartate. ATP is bound by residues 218–220 (RDE) and Gln227. His454 provides a ligand contact to L-aspartate. Glu488 lines the ATP pocket. Arg495 contacts L-aspartate. 540–543 (GLDR) is an ATP binding site.

Belongs to the class-II aminoacyl-tRNA synthetase family. Type 1 subfamily. As to quaternary structure, homodimer.

It localises to the cytoplasm. The catalysed reaction is tRNA(Asx) + L-aspartate + ATP = L-aspartyl-tRNA(Asx) + AMP + diphosphate. Functionally, aspartyl-tRNA synthetase with relaxed tRNA specificity since it is able to aspartylate not only its cognate tRNA(Asp) but also tRNA(Asn). Reaction proceeds in two steps: L-aspartate is first activated by ATP to form Asp-AMP and then transferred to the acceptor end of tRNA(Asp/Asn). In Methylibium petroleiphilum (strain ATCC BAA-1232 / LMG 22953 / PM1), this protein is Aspartate--tRNA(Asp/Asn) ligase.